The following is a 267-amino-acid chain: MMSSKPTSHAEVNETIPNPYPPSSFMAPGFQQPLGSINLENQAQGAQRAQPYGITSPGIFASSQPGQGNIQMINPSVGTAVMNFKEEAKALGVIQIMVGLMHIGFGIVLCLISFSFREVLGFASTAVIGGYPFWGGLSFIISGSLSVSASKELSRCLVKGSLGMNIVSSILAFIGVILLLVDMCINGVAGQDYWAVLSGKGISATLMIFSLLEFFVACATAHFANQANTTTNMSVLVIPNMYESNPVTPASSSAPPRCNNYSANAPK.

Residues 1–91 are Cytoplasmic-facing; that stretch reads MMSSKPTSHA…MNFKEEAKAL (91 aa). Residues 92-112 traverse the membrane as a helical segment; sequence GVIQIMVGLMHIGFGIVLCLI. Residues 113 to 120 lie on the Extracellular side of the membrane; sequence SFSFREVL. The helical transmembrane segment at 121-141 threads the bilayer; sequence GFASTAVIGGYPFWGGLSFII. Topologically, residues 142-160 are cytoplasmic; it reads SGSLSVSASKELSRCLVKG. Residues 161–181 traverse the membrane as a helical segment; the sequence is SLGMNIVSSILAFIGVILLLV. Residues 182–200 are Extracellular-facing; it reads DMCINGVAGQDYWAVLSGK. The chain crosses the membrane as a helical span at residues 201–221; the sequence is GISATLMIFSLLEFFVACATA. Topologically, residues 222 to 267 are cytoplasmic; it reads HFANQANTTTNMSVLVIPNMYESNPVTPASSSAPPRCNNYSANAPK. The interval 248 to 267 is disordered; sequence TPASSSAPPRCNNYSANAPK.

This sequence belongs to the MS4A family.

Its subcellular location is the membrane. In terms of biological role, may be involved in signal transduction as a component of a multimeric receptor complex. The chain is Membrane-spanning 4-domains subfamily A member 12 (MS4A12) from Homo sapiens (Human).